We begin with the raw amino-acid sequence, 670 residues long: DNA ligase (670 aa).

Residues 32–36 (DSEYD), 81–82 (SL), and Glu114 contribute to the NAD(+) site. The N6-AMP-lysine intermediate role is filled by Lys116. Positions 137, 174, 291, and 315 each coordinate NAD(+). The Zn(2+) site is built by Cys409, Cys412, Cys427, and Cys433. One can recognise a BRCT domain in the interval 592 to 670 (ASENLFKDKT…EEEFLAQITR (79 aa)).

It belongs to the NAD-dependent DNA ligase family. LigA subfamily. It depends on Mg(2+) as a cofactor. The cofactor is Mn(2+).

The enzyme catalyses NAD(+) + (deoxyribonucleotide)n-3'-hydroxyl + 5'-phospho-(deoxyribonucleotide)m = (deoxyribonucleotide)n+m + AMP + beta-nicotinamide D-nucleotide.. In terms of biological role, DNA ligase that catalyzes the formation of phosphodiester linkages between 5'-phosphoryl and 3'-hydroxyl groups in double-stranded DNA using NAD as a coenzyme and as the energy source for the reaction. It is essential for DNA replication and repair of damaged DNA. This chain is DNA ligase, found in Haemophilus influenzae (strain PittEE).